Consider the following 74-residue polypeptide: Anaphase-promoting complex subunit 13 (74 aa).

The disordered stretch occupies residues 33 to 53 (LNELPEPEQDNGGTTESVKEQ).

This sequence belongs to the APC13 family. In terms of assembly, the mammalian APC/C is composed at least of 14 distinct subunits ANAPC1, ANAPC2, CDC27/APC3, ANAPC4, ANAPC5, CDC16/APC6, ANAPC7, CDC23/APC8, ANAPC10, ANAPC11, CDC26/APC12, ANAPC13, ANAPC15 and ANAPC16 that assemble into a complex of at least 19 chains with a combined molecular mass of around 1.2 MDa; APC/C interacts with FZR1 and FBXO5.

The protein localises to the nucleus. It functions in the pathway protein modification; protein ubiquitination. Its function is as follows. Component of the anaphase promoting complex/cyclosome (APC/C), a cell cycle-regulated E3 ubiquitin ligase that controls progression through mitosis and the G1 phase of the cell cycle. The APC/C complex acts by mediating ubiquitination and subsequent degradation of target proteins: it mainly mediates the formation of 'Lys-11'-linked polyubiquitin chains and, to a lower extent, the formation of 'Lys-48'- and 'Lys-63'-linked polyubiquitin chains. The APC/C complex catalyzes assembly of branched 'Lys-11'-/'Lys-48'-linked branched ubiquitin chains on target proteins. The protein is Anaphase-promoting complex subunit 13 (ANAPC13) of Bos taurus (Bovine).